Consider the following 343-residue polypeptide: Low conductance mechanosensitive channel YnaI (343 aa).

The Periplasmic portion of the chain corresponds to methionine 1–asparagine 9. The chain crosses the membrane as a helical span at residues alanine 10–phenylalanine 30. Residues arginine 31–phenylalanine 40 are Cytoplasmic-facing. The helical transmembrane segment at leucine 41–isoleucine 61 threads the bilayer. Over asparagine 62 to valine 77 the chain is Periplasmic. Residues isoleucine 78–isoleucine 98 form a helical membrane-spanning segment. Topologically, residues asparagine 99–threonine 125 are cytoplasmic. A helical membrane pass occupies residues isoleucine 126–leucine 146. A topological domain (periplasmic) is located at residue threonine 147. A helical transmembrane segment spans residues phenylalanine 148 to phenylalanine 168. The Cytoplasmic portion of the chain corresponds to serine 169–arginine 343.

The protein belongs to the MscS (TC 1.A.23) family. As to quaternary structure, homoheptamer.

The protein localises to the cell inner membrane. Functionally, mechanosensitive channel that protects cells against hypoosmotic stress when highly overexpressed. This is Low conductance mechanosensitive channel YnaI (ynaI) from Escherichia coli (strain K12).